The primary structure comprises 99 residues: UPF0125 protein PM0166 (99 aa).

It belongs to the UPF0125 (RnfH) family.

The sequence is that of UPF0125 protein PM0166 from Pasteurella multocida (strain Pm70).